Reading from the N-terminus, the 646-residue chain is Wee1-like protein kinase (646 aa).

The disordered stretch occupies residues 1–181 (MSFLSRQQPP…GTPPHKTFRK (181 aa)). Residues 32-43 (DCEEEEEEEEEE) show a composition bias toward acidic residues. The residue at position 53 (serine 53) is a Phosphoserine; by PLK1. Residues serine 78 and serine 85 each carry the phosphoserine modification. Positions 94-103 (LLPGACPGAD) are enriched in low complexity. Phosphoserine; by CDK1 is present on serine 123. Phosphoserine is present on residues serine 127, serine 137, serine 139, serine 150, and serine 165. The span at 158–170 (RAGEGRRSPRPDH) shows a compositional bias: basic and acidic residues. Phosphothreonine is present on residues threonine 187, threonine 190, and threonine 239. 3 positions are modified to phosphoserine: serine 270, serine 307, and serine 312. Positions 299–569 (FHELEKIGSG…AMALVKHSVL (271 aa)) constitute a Protein kinase domain. ATP is bound by residues 305–313 (IGSGEFGSV) and lysine 328. Asparagine 342 serves as a coordination point for Mg(2+). Catalysis depends on aspartate 426, which acts as the Proton acceptor. Mg(2+) is bound by residues asparagine 431, aspartate 463, and glycine 465. Serine 642 bears the Phosphoserine; by BRSK1 and BRSK2 mark.

The protein belongs to the protein kinase superfamily. Ser/Thr protein kinase family. WEE1 subfamily. Mg(2+) serves as cofactor. In terms of processing, phosphorylated during M and G1 phases. Also autophosphorylated. Phosphorylation at Ser-642 by BRSK1 and BRSK2 in post-mitotic neurons, leads to down-regulate WEE1 activity in polarized neurons. Phosphorylated at Ser-53 and Ser-123 by PLK1 and CDK1, respectively, generating an signal for degradation that can be recognized by the SCF(BTRC) complex, leading to its ubiquitination and degradation at the onset of G2/M phase. Post-translationally, dephosphorylated at Thr-239 by CTDP1. Dephosphorylated at Ser-53 and Ser-123 by the serine/threonine-protein phosphatase 2A preventing its ubiquitin-mediated degradation. Ubiquitinated and degraded at the onset of G2/M phase.

The protein localises to the nucleus. It catalyses the reaction L-tyrosyl-[protein] + ATP = O-phospho-L-tyrosyl-[protein] + ADP + H(+). With respect to regulation, synthesis is increased during S and G2 phases, presumably by an increase in transcription; activity is decreased by phosphorylation during M phase. Protein levels fall in M phase as a result of decreased synthesis combined with degradation. Activity seems to be negatively regulated by phosphorylation upon entry into mitosis, although N-terminal phosphorylation might also regulate the protein stability via protection from proteolysis or might regulate the subcellular location. Acts as a negative regulator of entry into mitosis (G2 to M transition) by protecting the nucleus from cytoplasmically activated cyclin B1-complexed CDK1 before the onset of mitosis by mediating phosphorylation of CDK1 on 'Tyr-15'. Specifically phosphorylates and inactivates cyclin B1-complexed CDK1 reaching a maximum during G2 phase and a minimum as cells enter M phase. Phosphorylation of cyclin B1-CDK1 occurs exclusively on 'Tyr-15' and phosphorylation of monomeric CDK1 does not occur. Its activity increases during S and G2 phases and decreases at M phase when it is hyperphosphorylated. A correlated decrease in protein level occurs at M/G1 phase, probably due to its degradation. In Homo sapiens (Human), this protein is Wee1-like protein kinase.